The chain runs to 307 residues: MEGVVLLHKPKGMTSHDCVFKLRKILREKRIGHTGTLDPDVTGVLPICVGRATKIAQFLTSETKTYEGEVTLGFSTTTEDASGEVVETKHVDRVITRKEVEEALVTLTGTIEQMPPMFSAVKVNGKKLYEYARAGQEVERPVRTITIHEFVLLDDREVFEGETISFRFRVTCSKGTYVRTLAVMIGEKLGFPSHMSHLVRTASGEFLLEDCISFEEIEENVQNGTVESIFISIDEALSKFPKMVVDEKQAEKIKNGMFLKNELQITAPFITVFDKNDRCLAIYEHHPKHPGMLKPMKVLVNNQELKL.

Aspartate 38 functions as the Nucleophile in the catalytic mechanism.

It belongs to the pseudouridine synthase TruB family. Type 1 subfamily.

The catalysed reaction is uridine(55) in tRNA = pseudouridine(55) in tRNA. Functionally, responsible for synthesis of pseudouridine from uracil-55 in the psi GC loop of transfer RNAs. The polypeptide is tRNA pseudouridine synthase B (Bacillus cereus (strain ZK / E33L)).